Here is a 531-residue protein sequence, read N- to C-terminus: UDP-glucuronosyltransferase 1A6 (531 aa).

An N-terminal signal peptide occupies residues 1–26 (MACLLPAAQTLPAGFLFLVLWASVLG). 2 N-linked (GlcNAc...) asparagine glycosylation sites follow: Asn-293 and Asn-431. The helical transmembrane segment at 489–505 (VIGFLLAIVLTVVFIVF) threads the bilayer.

Belongs to the UDP-glycosyltransferase family. In terms of tissue distribution, expressed in liver, kidney and at very low levels in colon.

The protein resides in the microsome. It localises to the endoplasmic reticulum membrane. The catalysed reaction is glucuronate acceptor + UDP-alpha-D-glucuronate = acceptor beta-D-glucuronoside + UDP + H(+). The enzyme catalyses (5Z,8Z,11Z,14Z)-eicosatetraenoate + UDP-alpha-D-glucuronate = O-[(5Z),(8Z),(11Z),(14Z)-eicosatetraenoyl]-beta-D-glucuronate + UDP. It catalyses the reaction 15-hydroxy-(5Z,8Z,11Z,13E)-eicosatetraenoate + UDP-alpha-D-glucuronate = 15-O-(beta-D-glucuronosyl)-(5Z,8Z,11Z,14Z)-eicosatetraenoate + UDP + H(+). It carries out the reaction (E)-ferulate + UDP-alpha-D-glucuronate = (E)-4-O-(beta-D-glucuronosyl)-ferulate + UDP + H(+). The catalysed reaction is (E)-ferulate + UDP-alpha-D-glucuronate = (E)-ferulic acid beta-D-glucuronate ester + UDP. In terms of biological role, UDP-glucuronosyltransferase (UGT) that catalyzes phase II biotransformation reactions in which lipophilic substrates are conjugated with glucuronic acid to facilitate their inactivation and excretion from the body. Essential for the elimination and detoxification of drugs, xenobiotics and endogenous compounds. Involved in the glucuronidation of arachidonic acid (AA) and AA-derived eicosanoids including 15-HETE and 20-HETE. Conjugates small planar phenolic molecules such as 4-nitrophenol, 1-naphthol, and 4-methylumbelliferone. The bulky phenol 4-hydroxybiphenyl, androgens and estrogens are not substrates. 2-hydroxybiphenyl is an excellent substrate. Involved in the glucuronidation of the phytochemical ferulic acid at the phenolic or the carboxylic acid group. This chain is UDP-glucuronosyltransferase 1A6, found in Mus musculus (Mouse).